The primary structure comprises 775 residues: Acetamidase regulatory protein (775 aa).

Polar residues predominate over residues 1–15; it reads MSSTAHNSQPSTGNG. Residues 1-20 form a disordered region; the sequence is MSSTAHNSQPSTGNGVTKRK. Residues 26–59 constitute a DNA-binding region (zn(2)-C6 fungal-type); sequence CIHCHRRKVRCDARIVGLPCSNCRSAGKADCRIH. Polar residues predominate over residues 126–153; it reads PHSSYTNGNHLSNNRGSQPITETQTFTR. 2 disordered regions span residues 126–159 and 630–699; these read PHSS…GADR and ATSE…HQNQ. The segment covering 630–644 has biased composition (basic and acidic residues); it reads ATSERPRRFSTHDQN. A compositionally biased stretch (pro residues) spans 674–689; the sequence is PRPPYEVPTPESPRMP.

Its subcellular location is the nucleus. Positively regulates the expression of genes involved in the catabolism of certain amides, omega amino acids, and lactams. This chain is Acetamidase regulatory protein (amdR), found in Aspergillus oryzae (strain ATCC 42149 / RIB 40) (Yellow koji mold).